The sequence spans 478 residues: Septin-4 (478 aa).

Residues 1–115 (MDRSLGWQGN…RSPWGKLDPY (115 aa)) are disordered. A compositionally biased stretch (basic and acidic residues) spans 13–26 (PEDRTEAGIKRFLE). A compositionally biased stretch (low complexity) spans 95–108 (APAPLSPSARPRSP). Phosphoserine is present on residues Ser-117 and Ser-118. In terms of domain architecture, Septin-type G spans 141-414 (KGFDFTLMVA…ENYRAQCIQS (274 aa)). Residues 151 to 158 (GESGLGKS) are G1 motif. Residues 151 to 158 (GESGLGKS) and Thr-185 contribute to the GTP site. Residues 208–211 (DTPG) form a G3 motif region. The tract at residues 289–292 (AKAD) is G4 motif. 290–298 (KADTLTPPE) is a binding site for GTP. Position 325 is a phosphoserine (Ser-325). 2 residues coordinate GTP: Gly-348 and Arg-363. Residues 428-448 (LTRESGTDFPIPAVPPGTDPE) are disordered. Ser-432 is subject to Phosphoserine. A Phosphothreonine modification is found at Thr-434. The stretch at 447-478 (PETEKLIREKDEELRRMQEMLHKIQKQMKENY) forms a coiled coil.

It belongs to the TRAFAC class TrmE-Era-EngA-EngB-Septin-like GTPase superfamily. Septin GTPase family. As to quaternary structure, septins polymerize into heterooligomeric protein complexes that form filaments, and can associate with cellular membranes, actin filaments and microtubules. GTPase activity is required for filament formation. Interacts with SEPTIN8. In a mesenchymal cell line, interacts with SEPTIN9 isoform 2 variants HNA Trp-106 and Phe-111, but not the wild type SEPTIN9. Component of a septin core octameric complex consisting of SEPTIN12, SEPTIN7, SEPTIN6 and SEPTIN2 or SEPTIN4 in the order 12-7-6-2-2-6-7-12 or 12-7-6-4-4-6-7-12. Interacts with SEPTIN14 (via C-terminus). Interacts with DYRK1A. Interacts with SLC6A3/DAT and SNCA/alpha-synuclein. Interacts with STX1A; in the striatum. Interacts with XIAP (via BIR3 domain) following the induction of apoptosis. Interacts with AREL1 (via HECT domain); in the cytoplasm following induction of apoptosis. Part of a complex composed of SEPTIN4 isoform ARTS, XIAP and BCL2, within the complex interacts with both BCL2 (via BH3 domain) and XIAP, ARTS acts as a scaffold protein and stabilizes the complex. Interacts with XIAP (via BIR3 domain) following the induction of apoptosis. Phosphorylated by DYRK1A. Post-translationally, ubiquitinated by AREL1. In terms of tissue distribution, widely expressed in adult and fetal tissues with highest expression in adult brain (at protein level), heart, liver and adrenal gland and fetal heart, kidney, liver and lung. Expressed in presynaptic terminals of dopaminergic neurons projecting from the substantia nigra pars compacta to the striatum (at protein level). Expressed in axonal varicosities in dopaminergic nerve terminals (at protein level). Expressed in the putamen and in the adjacent cerebral cortex (at protein level). Expressed in colonic crypts (at protein level). Also expressed in colorectal cancers and malignant melanomas. Expressed in platelets. Highly expressed in the brain and heart.

The protein localises to the cytoplasm. It localises to the cell projection. It is found in the cilium. The protein resides in the flagellum. Its subcellular location is the cytoplasmic vesicle. The protein localises to the secretory vesicle. It localises to the axon. It is found in the dendrite. The protein resides in the perikaryon. Its subcellular location is the synapse. The protein localises to the mitochondrion. It localises to the nucleus. In terms of biological role, filament-forming cytoskeletal GTPase. Pro-apoptotic protein involved in LGR5-positive intestinal stem cell and Paneth cell expansion in the intestines, via its interaction with XIAP. May also play a role in the regulation of cell fate in the intestine. Positive regulator of apoptosis involved in hematopoietic stem cell homeostasis; via its interaction with XIAP. Negative regulator of repair and hair follicle regeneration in response to injury, due to inhibition of hair follicle stem cell proliferation, potentially via its interaction with XIAP. Plays an important role in male fertility and sperm motility. During spermiogenesis, essential for the establishment of the annulus (a fibrous ring structure connecting the midpiece and the principal piece of the sperm flagellum) which is a requisite for the structural and mechanical integrity of the sperm. Involved in the migration of cortical neurons and the formation of neuron leading processes during embryonic development. Required for dopaminergic metabolism in presynaptic autoreceptors; potentially via activity as a presynaptic scaffold protein. Its function is as follows. Required for the induction of cell death mediated by TGF-beta and possibly by other apoptotic stimuli. Induces apoptosis through binding and inhibition of XIAP resulting in significant reduction in XIAP levels, leading to caspase activation and cell death. Mediates the interaction between BCL2 and XIAP, thereby positively regulating the ubiquitination and degradation of BCL2 and promoting apoptosis. This Homo sapiens (Human) protein is Septin-4.